Here is a 359-residue protein sequence, read N- to C-terminus: Alanine racemase (359 aa).

Lys-34 functions as the Proton acceptor; specific for D-alanine in the catalytic mechanism. The residue at position 34 (Lys-34) is an N6-(pyridoxal phosphate)lysine. Arg-129 is a binding site for substrate. Tyr-255 functions as the Proton acceptor; specific for L-alanine in the catalytic mechanism. Met-303 serves as a coordination point for substrate.

Belongs to the alanine racemase family. Pyridoxal 5'-phosphate serves as cofactor.

It catalyses the reaction L-alanine = D-alanine. The protein operates within amino-acid biosynthesis; D-alanine biosynthesis; D-alanine from L-alanine: step 1/1. In terms of biological role, catalyzes the interconversion of L-alanine and D-alanine. May also act on other amino acids. In Shigella dysenteriae serotype 1 (strain Sd197), this protein is Alanine racemase (alr).